The sequence spans 190 residues: 7-methyl-GTP pyrophosphatase (190 aa).

The Proton acceptor role is filled by D69.

The protein belongs to the Maf family. YceF subfamily. A divalent metal cation serves as cofactor.

The protein resides in the cytoplasm. The catalysed reaction is N(7)-methyl-GTP + H2O = N(7)-methyl-GMP + diphosphate + H(+). Functionally, nucleoside triphosphate pyrophosphatase that hydrolyzes 7-methyl-GTP (m(7)GTP). May have a dual role in cell division arrest and in preventing the incorporation of modified nucleotides into cellular nucleic acids. This Xanthomonas oryzae pv. oryzae (strain MAFF 311018) protein is 7-methyl-GTP pyrophosphatase.